A 152-amino-acid polypeptide reads, in one-letter code: Cell division protein SepF (152 aa).

It belongs to the SepF family. As to quaternary structure, homodimer. Interacts with FtsZ.

The protein resides in the cytoplasm. In terms of biological role, cell division protein that is part of the divisome complex and is recruited early to the Z-ring. Probably stimulates Z-ring formation, perhaps through the cross-linking of FtsZ protofilaments. Its function overlaps with FtsA. The polypeptide is Cell division protein SepF (Clostridioides difficile (strain 630) (Peptoclostridium difficile)).